Reading from the N-terminus, the 540-residue chain is Alanine aminotransferase 2 (540 aa).

Lys-358 carries the N6-(pyridoxal phosphate)lysine modification.

Belongs to the class-I pyridoxal-phosphate-dependent aminotransferase family. Alanine aminotransferase subfamily. In terms of assembly, homodimer. The cofactor is pyridoxal 5'-phosphate.

It catalyses the reaction L-alanine + 2-oxoglutarate = pyruvate + L-glutamate. It functions in the pathway amino-acid degradation; L-alanine degradation via transaminase pathway; pyruvate from L-alanine: step 1/1. Functionally, catalyzes the reversible transamination between alanine and 2-oxoglutarate to form pyruvate and glutamate. The polypeptide is Alanine aminotransferase 2 (gpt2) (Xenopus laevis (African clawed frog)).